A 1076-amino-acid chain; its full sequence is Inositol-1,4,5-trisphosphate 5-phosphatase 1 (1076 aa).

Residues 144–474 (LRKLLTNGSF…GDALARIYTG (331 aa)) form the SAC domain. Residues 534–880 (YDPIHEYVNH…QEVRDASQTS (347 aa)) are catalytic. Disordered stretches follow at residues 930–958 (AAPP…DWIS) and 977–1076 (LSPA…KPLV). Composition is skewed to low complexity over residues 977-1004 (LSPA…IKPN) and 1025-1040 (SGSS…LTPV). Residues 1065-1076 (PEESSISWKPLV) are compositionally biased toward polar residues.

This sequence belongs to the synaptojanin family. In the central section; belongs to the inositol 1,4,5-trisphosphate 5-phosphatase family. The cofactor is Mg(2+).

The protein localises to the cytoplasm. It carries out the reaction a 1,2-diacyl-sn-glycero-3-phospho-(1D-myo-inositol-4,5-bisphosphate) + H2O = a 1,2-diacyl-sn-glycero-3-phospho-(1D-myo-inositol 4-phosphate) + phosphate. Controls the cellular levels and subcellular distribution of phosphatidylinositol 3-phosphate and phosphatidylinositol 4,5-bisphosphate. Involved in distinct membrane trafficking and signal transduction pathways. Highly active against a range of soluble and lipid inositol phosphates. Active in dephosphorylating the 5-position of Ins(1,4,5)P3 and Ins(1,3,4,5)P4 and to a lesser extent Ins(1,4,5,6)P4. The enzyme is also active against PI(4,5)P2 presented in sonicated vesicles and Triton mixed micelles, and somewhat less active against PI(3,5)P2 in unilamellar vesicles. Activity against PI(3,5)P2 drops sharply when this substrate is presented in mixed micelles. Also hydrolyzes PIP3 to produce PI(3,4)P2. The polypeptide is Inositol-1,4,5-trisphosphate 5-phosphatase 1 (syj1) (Schizosaccharomyces pombe (strain 972 / ATCC 24843) (Fission yeast)).